We begin with the raw amino-acid sequence, 199 residues long: Chaperone protein TorD (199 aa).

This sequence belongs to the TorD/DmsD family. TorD subfamily.

It localises to the cytoplasm. Its function is as follows. Involved in the biogenesis of TorA. Acts on TorA before the insertion of the molybdenum cofactor and, as a result, probably favors a conformation of the apoenzyme that is competent for acquiring the cofactor. This is Chaperone protein TorD from Actinobacillus pleuropneumoniae serotype 7 (strain AP76).